The chain runs to 292 residues: Putative phosphatase MPN_381 (292 aa).

Asp11 (nucleophile) is an active-site residue. Asp11 serves as a coordination point for Mg(2+). Residue Leu12 participates in phosphate binding. Mg(2+) is bound at residue Asp13. Phosphate contacts are provided by residues 60-61 and Lys217; that span reads TG. Asp242 lines the Mg(2+) pocket. Asn245 is a phosphate binding site.

This sequence belongs to the HAD-like hydrolase superfamily. Cof family. The cofactor is Mg(2+).

The chain is Putative phosphatase MPN_381 from Mycoplasma pneumoniae (strain ATCC 29342 / M129 / Subtype 1) (Mycoplasmoides pneumoniae).